A 425-amino-acid chain; its full sequence is Elongation factor 1-alpha (425 aa).

Residues 5–221 (KPHMNLAVIG…DLFKMPDMPT (217 aa)) enclose the tr-type G domain. The tract at residues 14 to 21 (GHIDHGKS) is G1. 14–21 (GHIDHGKS) is a GTP binding site. Ser-21 contributes to the Mg(2+) binding site. The tract at residues 70-74 (GITID) is G2. The segment at 91–94 (DCPG) is G3. Residues 91–95 (DCPGH) and 146–149 (NKMD) contribute to the GTP site. Residues 146-149 (NKMD) form a G4 region. The interval 185 to 187 (SAF) is G5.

It belongs to the TRAFAC class translation factor GTPase superfamily. Classic translation factor GTPase family. EF-Tu/EF-1A subfamily.

It localises to the cytoplasm. It catalyses the reaction GTP + H2O = GDP + phosphate + H(+). Its function is as follows. GTP hydrolase that promotes the GTP-dependent binding of aminoacyl-tRNA to the A-site of ribosomes during protein biosynthesis. This is Elongation factor 1-alpha from Methanocorpusculum labreanum (strain ATCC 43576 / DSM 4855 / Z).